The following is a 106-amino-acid chain: Ribulose bisphosphate carboxylase small subunit (106 aa).

It belongs to the RuBisCO small chain family. In terms of assembly, heterohexadecamer of 8 large and 8 small subunits.

It is found in the plastid. The protein resides in the cyanelle. Functionally, ruBisCO catalyzes two reactions: the carboxylation of D-ribulose 1,5-bisphosphate, the primary event in carbon dioxide fixation, as well as the oxidative fragmentation of the pentose substrate. Both reactions occur simultaneously and in competition at the same active site. Although the small subunit is not catalytic it is essential for maximal activity. The chain is Ribulose bisphosphate carboxylase small subunit from Cyanophora paradoxa.